Here is a 178-residue protein sequence, read N- to C-terminus: ATP-dependent protease subunit HslV (178 aa).

Residue Thr7 is part of the active site. 3 residues coordinate Na(+): Gly162, Cys165, and Thr168.

Belongs to the peptidase T1B family. HslV subfamily. As to quaternary structure, a double ring-shaped homohexamer of HslV is capped on each side by a ring-shaped HslU homohexamer. The assembly of the HslU/HslV complex is dependent on binding of ATP.

The protein resides in the cytoplasm. The catalysed reaction is ATP-dependent cleavage of peptide bonds with broad specificity.. Allosterically activated by HslU binding. Protease subunit of a proteasome-like degradation complex believed to be a general protein degrading machinery. This Cupriavidus metallidurans (strain ATCC 43123 / DSM 2839 / NBRC 102507 / CH34) (Ralstonia metallidurans) protein is ATP-dependent protease subunit HslV.